Here is a 617-residue protein sequence, read N- to C-terminus: Putative type VI secretion system protein VgrGB (617 aa).

The tract at residues 449–469 is disordered; that stretch reads RTFHATNPSPYPLPASKTRTS.

This sequence belongs to the VgrG protein family.

Functionally, a Vgr protein that is probably part of a type VI secretion system (T6SS). May be required for export of proteins involved in Rhs-mediated cellular contact-dependent growth inhibition (CDI). This chain is Putative type VI secretion system protein VgrGB (vgrGB), found in Dickeya dadantii (strain 3937) (Erwinia chrysanthemi (strain 3937)).